A 653-amino-acid chain; its full sequence is Choline transporter-like protein 3 (653 aa).

A helical membrane pass occupies residues 34–54 (WLFLFFLFWTGLVFIMGYSVV). 2 N-linked (GlcNAc...) asparagine glycosylation sites follow: asparagine 136 and asparagine 151. The next 5 helical transmembrane spans lie at 213–233 (DTILGLCILALALSLAMMFTF), 243–263 (IFISLVILGLLFVCGVLWWLY), 284–304 (VLGFAIVSTGITAVLLVLIFV), 334–354 (LWTFAILIFFWVLWVAVLLSL), and 384–404 (LIGLIWTSEFILACQQMTIAG). Residues asparagine 412, asparagine 503, and asparagine 521 are each glycosylated (N-linked (GlcNAc...) asparagine). 2 helical membrane passes run 534-554 (FIIFLGKVLVVCFTVFGGLMA) and 563-583 (VWAVPLLLVAFFAYLVAHSFL). The disordered stretch occupies residues 632-653 (RAQQDKHSLRNEEGTELQAIVR). Positions 634 to 644 (QQDKHSLRNEE) are enriched in basic and acidic residues.

The protein belongs to the CTL (choline transporter-like) family.

Its subcellular location is the membrane. The sequence is that of Choline transporter-like protein 3 (SLC44A3) from Homo sapiens (Human).